The chain runs to 1057 residues: MPKRNDIKTILVIGSGPIIIGQAAEFDYAGTQACLALKEEGYRVILVNSNPATIMTDKEIADKVYIEPLTHDFIARIIRKEQPDALLPTLGGQTGLNMAIQLHESGVLQDNNVQLLGTELTSIQQAEDREMFRTLMNDLNVPVPESDIVNTVEQAFKFKEQVGYPLIVRPAFTMGGTGGGICHNDEELHEIVSNGLHYSPATQCLLEKSIAGFKEIEYEVMRDKNDNAIVVCNMENIDPVGIHTGDSIVVAPSQTLSDVEYQMLRDVSLKVIRALGIEGGCNVQLALDPHSFDYYIIEVNPRVSRSSALASKATGYPIAKLAAKIAVGLTLDEMLNPITGTSYAAFEPTLDYVISKIPRFPFDKFEKGERELGTQMKATGEVMAIGRTYEESLLKAIRSLEYGVHHLGLPNGESFDLDYIKERISHQDDERLFFIGEAIRRGTTLEEIHNMTQIDYFFLHKFQNIIDIEHQLKEHQGDLEYLKYAKDYGFSDKTIAHRFNMTEEEVYQLRMENDIKPVYKMVDTCAAEFESSTPYYYGTYETENESIVTDKEKILVLGSGPIRIGQGVEFDYATVHAVWAIQKAGYEAIIVNNNPETVSTDFSISDKLYFEPLTEEDVMNIINLEKPKGVVVQFGGQTAINLADKLAKHGVKILGTSLENLNRAEDRKEFEALLRKINVPQPQGKSATSPEEALANAAEIGYPVVVRPSYVLGGRAMEIVDNDKELENYMTQAVKASPEHPVLVDRYLTGKEIEVDAICDGETVIIPGIMEHIERAGVHSGDSIAVYPPQTLTEDELATLEDYTIKLAKGLNIIGLINIQFVIAHDGVYVLEVNPRSSRTVPFLSKITDIPMAQLAMRAIIGEKLTDMGYQEGVQPYAEGVFVKAPVFSFNKLKNVDITLGPEMKSTGEVMGKDTTLEKALFKGLTGSGVEVKDHGTVLMTVSDKDKEEVVKLAQRLNEVGYKILATSGTANKLAEYDIPAEVVGKIGGENDLLTRIQNGDVQIVINTMTKGKEVERDGFQIRRTTVENGIPCLTSLDTANALTNVIESMTFTMRQM.

Positions 1 to 401 are carboxyphosphate synthetic domain; the sequence is MPKRNDIKTI…SLLKAIRSLE (401 aa). 12 residues coordinate ATP: R129, R169, G175, G176, K208, I210, E215, G241, I242, H243, Q284, and E298. Residues 133 to 327 form the ATP-grasp 1 domain; it reads RTLMNDLNVP…IAKLAAKIAV (195 aa). Positions 284, 298, and 300 each coordinate Mg(2+). Mn(2+) is bound by residues Q284, E298, and N300. The segment at 402-546 is oligomerization domain; it reads YGVHHLGLPN…YGTYETENES (145 aa). The carbamoyl phosphate synthetic domain stretch occupies residues 547-929; it reads IVTDKEKILV…ALFKGLTGSG (383 aa). The ATP-grasp 2 domain occupies 671–861; the sequence is EALLRKINVP…MAQLAMRAII (191 aa). ATP is bound by residues R707, R746, L748, E752, G777, V778, H779, S780, Q820, and E832. 3 residues coordinate Mg(2+): Q820, E832, and N834. Residues Q820, E832, and N834 each contribute to the Mn(2+) site. The MGS-like domain maps to 930 to 1057; the sequence is VEVKDHGTVL…ESMTFTMRQM (128 aa). The interval 930 to 1057 is allosteric domain; that stretch reads VEVKDHGTVL…ESMTFTMRQM (128 aa).

The protein belongs to the CarB family. In terms of assembly, composed of two chains; the small (or glutamine) chain promotes the hydrolysis of glutamine to ammonia, which is used by the large (or ammonia) chain to synthesize carbamoyl phosphate. Tetramer of heterodimers (alpha,beta)4. Requires Mg(2+) as cofactor. The cofactor is Mn(2+).

The catalysed reaction is hydrogencarbonate + L-glutamine + 2 ATP + H2O = carbamoyl phosphate + L-glutamate + 2 ADP + phosphate + 2 H(+). It catalyses the reaction hydrogencarbonate + NH4(+) + 2 ATP = carbamoyl phosphate + 2 ADP + phosphate + 2 H(+). The protein operates within amino-acid biosynthesis; L-arginine biosynthesis; carbamoyl phosphate from bicarbonate: step 1/1. It participates in pyrimidine metabolism; UMP biosynthesis via de novo pathway; (S)-dihydroorotate from bicarbonate: step 1/3. Functionally, large subunit of the glutamine-dependent carbamoyl phosphate synthetase (CPSase). CPSase catalyzes the formation of carbamoyl phosphate from the ammonia moiety of glutamine, carbonate, and phosphate donated by ATP, constituting the first step of 2 biosynthetic pathways, one leading to arginine and/or urea and the other to pyrimidine nucleotides. The large subunit (synthetase) binds the substrates ammonia (free or transferred from glutamine from the small subunit), hydrogencarbonate and ATP and carries out an ATP-coupled ligase reaction, activating hydrogencarbonate by forming carboxy phosphate which reacts with ammonia to form carbamoyl phosphate. In Staphylococcus aureus (strain Mu3 / ATCC 700698), this protein is Carbamoyl phosphate synthase large chain.